The sequence spans 93 residues: Cell division topological specificity factor (93 aa).

Belongs to the MinE family.

Functionally, prevents the cell division inhibition by proteins MinC and MinD at internal division sites while permitting inhibition at polar sites. This ensures cell division at the proper site by restricting the formation of a division septum at the midpoint of the long axis of the cell. This Agathobacter rectalis (strain ATCC 33656 / DSM 3377 / JCM 17463 / KCTC 5835 / VPI 0990) (Eubacterium rectale) protein is Cell division topological specificity factor.